Here is a 377-residue protein sequence, read N- to C-terminus: Guanine nucleotide-binding protein subunit beta-2 (377 aa).

WD repeat units follow at residues 63–93 (GHTGKVYSLDWTPEKNRIVSASQDGRLIVWN), 105–135 (LPCAWVMTCAFSPSGQSVACGGLDSVCSIFN), 154–185 (GHKGYVSSCQYVPDEDTHVITSSGDQTCVLWD), 202–233 (GHTADVQSVSISSSNPRLFVSGSCDSTARLWD), 246–276 (GHEGDVNTVKFFPDGNRFGTGSDDGTCRLFD), 293–323 (GDIPHVTSMAFSISGRLLFVGYSNGDCYVWD), and 339–369 (SHEGRISCLGLSADGSALCTGSWDTNLKIWA).

This sequence belongs to the WD repeat G protein beta family. In terms of assembly, g proteins are composed of 3 units, alpha, beta and gamma.

In terms of biological role, guanine nucleotide-binding proteins (G proteins) are involved as a modulator or transducer in various transmembrane signaling systems. The beta and gamma chains are required for the GTPase activity, for replacement of GDP by GTP, and for G protein-effector interaction. The chain is Guanine nucleotide-binding protein subunit beta-2 from Nicotiana tabacum (Common tobacco).